The primary structure comprises 508 residues: U4/U6 small nuclear ribonucleoprotein Prp31 (508 aa).

The disordered stretch occupies residues 1–45; it reads MSLADELLADLEEAGEEDGLYPGGEEGESDGEPGERQVDGGLEDI. Positions 7–32 are enriched in acidic residues; that stretch reads LLADLEEAGEEDGLYPGGEEGESDGE. 2 coiled-coil regions span residues 96-131 and 192-226; these read EADPEYRLIVAANNLTVEIDNELNIIHKFVRDKYSK and DDELQRLEEACDMALELNQSKHRIYEYVESRMSFI. The region spanning 226 to 344 is the Nop domain; it reads IAPNLSIIVG…IERKFDKWQE (119 aa). Disordered stretches follow at residues 345-368 and 442-461; these read PPPVKQVKPLPAPLDGQRKKRGGR and QSMTYGGKSTVRDRSSGTSS. Positions 362–375 match the Nuclear localization signal (NLS) motif; sequence RKKRGGRRYRKMKE.

This sequence belongs to the PRP31 family. In terms of assembly, identified in the spliceosome B complex. Component of the U4/U6-U5 tri-snRNP complex. Component of some MLL1/MLL complex.

The protein localises to the nucleus. It localises to the nucleus speckle. The protein resides in the cajal body. Involved in pre-mRNA splicing as component of the spliceosome. Required for the assembly of the U4/U5/U6 tri-snRNP complex, one of the building blocks of the spliceosome. The sequence is that of U4/U6 small nuclear ribonucleoprotein Prp31 (prpf31) from Danio rerio (Zebrafish).